The chain runs to 745 residues: Exocyst complex component 3 (745 aa).

Lys-28 is subject to N6-acetyllysine.

The protein belongs to the SEC6 family. As to quaternary structure, the exocyst complex is composed of EXOC1, EXOC2, EXOC3, EXOC4, EXOC5, EXOC6, EXOC7 and EXOC8. Interacts with EXOC3L1. Interacts with BIRC6/bruce. Interacts with MYRIP. Interacts with SLC6A9. As to expression, expressed in epididymis (at protein level).

It is found in the cytoplasm. It localises to the perinuclear region. The protein localises to the cell projection. The protein resides in the growth cone. Its subcellular location is the midbody. It is found in the golgi apparatus. It localises to the neuron projection. In terms of biological role, component of the exocyst complex involved in the docking of exocytic vesicles with fusion sites on the plasma membrane. The sequence is that of Exocyst complex component 3 (EXOC3) from Homo sapiens (Human).